A 318-amino-acid chain; its full sequence is NADH-ubiquinone oxidoreductase chain 1 (318 aa).

The next 8 membrane-spanning stretches (helical) occupy residues 2 to 22 (FTINLLLLITPALIAMAFLTL), 70 to 90 (LYMAAPTLALTIALLLWTPLP), 98 to 118 (FNLGLLFVLATSSLAVYSILW), 140 to 160 (ISYGVTLAIILLSTLLMSGSF), 173 to 193 (WLLLPSWPLTMMWFISTLAET), 217 to 237 (AGSFALFFMAEYMNIIMMNAL), 253 to 273 (ELYTMNFMTKTLLLTILFLWI), and 294 to 314 (LPLTLALCMWYISMPMLLSGI).

It belongs to the complex I subunit 1 family.

It localises to the mitochondrion inner membrane. The catalysed reaction is a ubiquinone + NADH + 5 H(+)(in) = a ubiquinol + NAD(+) + 4 H(+)(out). Core subunit of the mitochondrial membrane respiratory chain NADH dehydrogenase (Complex I) that is believed to belong to the minimal assembly required for catalysis. Complex I functions in the transfer of electrons from NADH to the respiratory chain. The immediate electron acceptor for the enzyme is believed to be ubiquinone. The protein is NADH-ubiquinone oxidoreductase chain 1 (MT-ND1) of Sapajus apella (Brown-capped capuchin).